The chain runs to 244 residues: Type III pantothenate kinase (244 aa).

Asp-7–Lys-14 lines the ATP pocket. Residues Tyr-95 and Gly-102–Arg-105 contribute to the substrate site. The active-site Proton acceptor is the Asp-104. Thr-126 is an ATP binding site. Thr-177 lines the substrate pocket.

It belongs to the type III pantothenate kinase family. As to quaternary structure, homodimer. The cofactor is NH4(+). K(+) is required as a cofactor.

It is found in the cytoplasm. The enzyme catalyses (R)-pantothenate + ATP = (R)-4'-phosphopantothenate + ADP + H(+). The protein operates within cofactor biosynthesis; coenzyme A biosynthesis; CoA from (R)-pantothenate: step 1/5. In terms of biological role, catalyzes the phosphorylation of pantothenate (Pan), the first step in CoA biosynthesis. This is Type III pantothenate kinase from Acinetobacter baumannii (strain ACICU).